Here is a 418-residue protein sequence, read N- to C-terminus: Beta-arrestin-1 (418 aa).

The tract at residues Met-1–Ser-163 is interaction with SRC. An interaction with CHRM2 region spans residues Pro-45–Ser-86. Residue Tyr-47 is modified to Phosphotyrosine. Residues Lys-250, Met-255, Lys-324, and Lys-326 each contribute to the 1D-myo-inositol hexakisphosphate site. Positions Ile-318 to Arg-418 are interaction with TRAF6. The segment at His-353–Asn-375 is disordered. Positions Lys-355–Pro-371 are enriched in basic and acidic residues. The [DE]-X(1,2)-F-X-X-[FL]-X-X-X-R motif signature appears at Asp-385–Arg-395. Positions Lys-397 to Arg-418 are disordered. The residue at position 412 (Ser-412) is a Phosphoserine; by GRK5.

The protein belongs to the arrestin family. In terms of assembly, monomer. Homodimer. Homooligomer; the self-association is mediated by InsP6-binding. Heterooligomer with ARRB2; the association is mediated by InsP6-binding. Interacts with ADRB2 (phosphorylated). Interacts with CHRM2 (phosphorylated). Interacts with LHCGR. Interacts with CYTH2 and CASR. Interacts with AP2B1 (dephosphorylated at 'Tyr-737'); phosphorylation of AP2B1 at 'Tyr-737' disrupts the interaction. Interacts (dephosphorylated at Ser-412) with CLTC. Interacts with CCR2 and GRK2. Interacts with CRR5. Interacts with PTAFR (phosphorylated on serine residues). Interacts with CLTC and MAP2K3. Interacts with CREB1. Interacts with TRAF6. Interacts with IGF1R and MDM2. Interacts with C5AR1. Interacts with PDE4D. Interacts with SRC (via the SH3 domain and the protein kinase domain); the interaction is independent of the phosphorylation state of SRC C-terminus. Interacts with TACR1. Interacts with RAF1. Interacts with CHUK, IKBKB and MAP3K14. Interacts with DVL1; the interaction is enhanced by phosphorylation of DVL1. Interacts with DVL2; the interaction is enhanced by phosphorylation of DVL2. Interacts with IGF1R. Associates with MAP kinase p38. Part of a MAPK signaling complex consisting of TACR1, ARRB1, SRC, MAPK1 (activated) and MAPK3 (activated). Part of a MAPK signaling complex consisting of F2RL1, ARRB1, RAF1, MAPK1 (activated) and MAPK3 (activated). Interacts with GPR143. Interacts with MAP2K4/MKK4. Interacts with HCK and CXCR1 (phosphorylated). Interacts with ACKR3 and ACKR4. Interacts with ARRDC1; the interaction is direct. Interacts with GPR61, GPR62 and GPR135. Constitutively phosphorylated at Ser-412 in the cytoplasm. At the plasma membrane, is rapidly dephosphorylated, a process that is required for clathrin binding and ADRB2 endocytosis but not for ADRB2 binding and desensitization. Once internalized, is rephosphorylated. Post-translationally, the ubiquitination status appears to regulate the formation and trafficking of beta-arrestin-GPCR complexes and signaling. Ubiquitination appears to occur GPCR-specific. Ubiquitinated by MDM2; the ubiquitination is required for rapid internalization of ADRB2. Deubiquitinated by USP33; the deubiquitination leads to a dissociation of the beta-arrestin-GPCR complex. Stimulation of a class A GPCR, such as ADRB2, induces transient ubiquitination and subsequently promotes association with USP33. In terms of tissue distribution, beta-arrestin 1A is found in cortex, cerebellum, striatum, pineal gland, retina and heart. Beta-arrestin 1B is found in spleen, lung, pituitary and kidney.

It localises to the cytoplasm. The protein localises to the nucleus. The protein resides in the cell membrane. Its subcellular location is the membrane. It is found in the clathrin-coated pit. It localises to the cell projection. The protein localises to the pseudopodium. The protein resides in the cytoplasmic vesicle. Its function is as follows. Functions in regulating agonist-mediated G-protein coupled receptor (GPCR) signaling by mediating both receptor desensitization and resensitization processes. During homologous desensitization, beta-arrestins bind to the GPRK-phosphorylated receptor and sterically preclude its coupling to the cognate G-protein; the binding appears to require additional receptor determinants exposed only in the active receptor conformation. The beta-arrestins target many receptors for internalization by acting as endocytic adapters (CLASPs, clathrin-associated sorting proteins) and recruiting the GPRCs to the adapter protein 2 complex 2 (AP-2) in clathrin-coated pits (CCPs). However, the extent of beta-arrestin involvement appears to vary significantly depending on the receptor, agonist and cell type. Internalized arrestin-receptor complexes traffic to intracellular endosomes, where they remain uncoupled from G-proteins. Two different modes of arrestin-mediated internalization occur. Class A receptors, like ADRB2, OPRM1, ENDRA, D1AR and ADRA1B dissociate from beta-arrestin at or near the plasma membrane and undergo rapid recycling. Class B receptors, like AVPR2, AGTR1, NTSR1, TRHR and TACR1 internalize as a complex with arrestin and traffic with it to endosomal vesicles, presumably as desensitized receptors, for extended periods of time. Receptor resensitization then requires that receptor-bound arrestin is removed so that the receptor can be dephosphorylated and returned to the plasma membrane. Involved in internalization of P2RY4 and UTP-stimulated internalization of P2RY2. Involved in phosphorylation-dependent internalization of OPRD1 ands subsequent recycling. Involved in the degradation of cAMP by recruiting cAMP phosphodiesterases to ligand-activated receptors. Beta-arrestins function as multivalent adapter proteins that can switch the GPCR from a G-protein signaling mode that transmits short-lived signals from the plasma membrane via small molecule second messengers and ion channels to a beta-arrestin signaling mode that transmits a distinct set of signals that are initiated as the receptor internalizes and transits the intracellular compartment. Acts as a signaling scaffold for MAPK pathways such as MAPK1/3 (ERK1/2). ERK1/2 activated by the beta-arrestin scaffold is largely excluded from the nucleus and confined to cytoplasmic locations such as endocytic vesicles, also called beta-arrestin signalosomes. Recruits c-Src/SRC to ADRB2 resulting in ERK activation. GPCRs for which the beta-arrestin-mediated signaling relies on both ARRB1 and ARRB2 (codependent regulation) include ADRB2, F2RL1 and PTH1R. For some GPCRs the beta-arrestin-mediated signaling relies on either ARRB1 or ARRB2 and is inhibited by the other respective beta-arrestin form (reciprocal regulation). Inhibits ERK1/2 signaling in AGTR1- and AVPR2-mediated activation (reciprocal regulation). Is required for SP-stimulated endocytosis of NK1R and recruits c-Src/SRC to internalized NK1R resulting in ERK1/2 activation, which is required for the antiapoptotic effects of SP. Is involved in proteinase-activated F2RL1-mediated ERK activity. Acts as a signaling scaffold for the AKT1 pathway. Is involved in alpha-thrombin-stimulated AKT1 signaling. Is involved in IGF1-stimulated AKT1 signaling leading to increased protection from apoptosis. Involved in activation of the p38 MAPK signaling pathway and in actin bundle formation. Involved in F2RL1-mediated cytoskeletal rearrangement and chemotaxis. Involved in AGTR1-mediated stress fiber formation by acting together with GNAQ to activate RHOA. Appears to function as signaling scaffold involved in regulation of MIP-1-beta-stimulated CCR5-dependent chemotaxis. Involved in attenuation of NF-kappa-B-dependent transcription in response to GPCR or cytokine stimulation by interacting with and stabilizing CHUK. May serve as nuclear messenger for GPCRs. Involved in OPRD1-stimulated transcriptional regulation by translocating to CDKN1B and FOS promoter regions and recruiting EP300 resulting in acetylation of histone H4. Involved in regulation of LEF1 transcriptional activity via interaction with DVL1 and/or DVL2 Also involved in regulation of receptors other than GPCRs. Involved in Toll-like receptor and IL-1 receptor signaling through the interaction with TRAF6 which prevents TRAF6 autoubiquitination and oligomerization required for activation of NF-kappa-B and JUN. Involved in IL8-mediated granule release in neutrophils. Binds phosphoinositides. Binds inositol hexakisphosphate (InsP6). Required for atypical chemokine receptor ACKR2-induced RAC1-LIMK1-PAK1-dependent phosphorylation of cofilin (CFL1) and for the up-regulation of ACKR2 from endosomal compartment to cell membrane, increasing its efficiency in chemokine uptake and degradation. Involved in the internalization of the atypical chemokine receptor ACKR3. Negatively regulates the NOTCH signaling pathway by mediating the ubiquitination and degradation of NOTCH1 by ITCH. Participates in the recruitment of the ubiquitin-protein ligase to the receptor. This chain is Beta-arrestin-1 (ARRB1), found in Bos taurus (Bovine).